The following is a 259-amino-acid chain: Pyridoxine 5'-phosphate synthase (259 aa).

Asn6 provides a ligand contact to 3-amino-2-oxopropyl phosphate. A 1-deoxy-D-xylulose 5-phosphate-binding site is contributed by 8–9 (DH). Residue Arg17 coordinates 3-amino-2-oxopropyl phosphate. Residue His42 is the Proton acceptor of the active site. Positions 44 and 49 each coordinate 1-deoxy-D-xylulose 5-phosphate. The Proton acceptor role is filled by Glu69. Thr99 is a 1-deoxy-D-xylulose 5-phosphate binding site. The Proton donor role is filled by His212. Residues Gly213 and 234-235 (GH) each bind 3-amino-2-oxopropyl phosphate.

The protein belongs to the PNP synthase family. In terms of assembly, homooctamer; tetramer of dimers.

The protein resides in the cytoplasm. The enzyme catalyses 3-amino-2-oxopropyl phosphate + 1-deoxy-D-xylulose 5-phosphate = pyridoxine 5'-phosphate + phosphate + 2 H2O + H(+). It participates in cofactor biosynthesis; pyridoxine 5'-phosphate biosynthesis; pyridoxine 5'-phosphate from D-erythrose 4-phosphate: step 5/5. Functionally, catalyzes the complicated ring closure reaction between the two acyclic compounds 1-deoxy-D-xylulose-5-phosphate (DXP) and 3-amino-2-oxopropyl phosphate (1-amino-acetone-3-phosphate or AAP) to form pyridoxine 5'-phosphate (PNP) and inorganic phosphate. In Nautilia profundicola (strain ATCC BAA-1463 / DSM 18972 / AmH), this protein is Pyridoxine 5'-phosphate synthase.